Consider the following 495-residue polypeptide: Lysine--tRNA ligase (495 aa).

Positions 406 and 413 each coordinate Mg(2+).

It belongs to the class-II aminoacyl-tRNA synthetase family. In terms of assembly, homodimer. The cofactor is Mg(2+).

It is found in the cytoplasm. It catalyses the reaction tRNA(Lys) + L-lysine + ATP = L-lysyl-tRNA(Lys) + AMP + diphosphate. In Staphylococcus aureus (strain MW2), this protein is Lysine--tRNA ligase.